Reading from the N-terminus, the 134-residue chain is Cytochrome b5 (134 aa).

Position 2 is an N-acetylalanine (Ala2). Lys7, Lys10, and Lys19 each carry N6-acetyllysine. In terms of domain architecture, Cytochrome b5 heme-binding spans Val9–His85. Heme-binding residues include His44 and His68. A helical membrane pass occupies residues Trp109–Thr131.

It belongs to the cytochrome b5 family.

The protein resides in the endoplasmic reticulum membrane. The protein localises to the microsome membrane. Cytochrome b5 is a membrane-bound hemoprotein functioning as an electron carrier for several membrane-bound oxygenases. The sequence is that of Cytochrome b5 (CYB5A) from Bos taurus (Bovine).